A 60-amino-acid polypeptide reads, in one-letter code: Ferredoxin (60 aa).

2 consecutive 4Fe-4S ferredoxin-type domains span residues 2–30 and 31–60; these read VTID…EIQG and DKVV…TVKE. 8 residues coordinate [4Fe-4S] cluster: Cys-9, Cys-14, Cys-17, Cys-21, Cys-41, Cys-44, Cys-47, and Cys-51.

It depends on [4Fe-4S] cluster as a cofactor.

Its function is as follows. Ferredoxins are iron-sulfur proteins that transfer electrons probably in the CO-dehydrogenase complex. The protein is Ferredoxin of Methanothermococcus thermolithotrophicus (Methanococcus thermolithotrophicus).